Reading from the N-terminus, the 475-residue chain is MVEIILSHLIFDQAYFSKVWPYMDSEYFESGPAKNTFKLIKSHVNEYHSVPSINALNVALENSSFTETEYSGVKTLISKLADSPEDHSWLVKETEKYVQQRAMFNATSKIIEIQTNAELPPEKRNKKMPDVGAIPDIMRQALSISFDSYVGHDWMDDYEARWLSYMNKARKVPFKLRILNKITKGGAETGTLNVLMAGVNVGKSLGLCSLAADYLQLGHNVLYISMEMAEEVCAKRIDANMLDVSLDDIDDGHISYAEYKGKMEKWREKSTLGRLIVKQYPTGGADANTFRSLLNELKLKKNFVPTIIIVDYLGICKSCRIRVYSENSYTTVKAIAEELRALAVETETVLWTAAQVGKQAWDSSDVNMSDIAESAGLPATADFMLAVIETEELAAAEQQLIKQIKSRYGDKNKWNKFLMGVQKGNQKWVEIEQDSTPTEVNEVAGSQQIQAEQNRYQRNESTRAQLDALANELKF.

The SF4 helicase domain maps to 165–444 (YMNKARKVPF…STPTEVNEVA (280 aa)). 197–204 (AGVNVGKS) is an ATP binding site. The interaction with the helicase assembly factor stretch occupies residues 456 to 475 (YQRNESTRAQLDALANELKF).

The protein belongs to the helicase family. DnaB subfamily. Homohexamer. The homohexamer is a trimer of asymmetric dimers. Interacts with the DNA primase; this interaction forms the active primosome complex, which is composed of 6 helicase and 1 primase subunits and expresses full helicase and primase activities. Interacts (via C-terminus) with the helicase assembly factor; this interaction brings about the rapid assembly of the helicase onto ssDNA. Part of the replicase complex that includes the DNA polymerase, the polymerase clamp, the clamp loader complex, the single-stranded DNA binding protein, the primase, the DnaB-like replicative helicase and the helicase assembly factor.

In terms of biological role, ATP-dependent DNA helicase essential for viral DNA replication and recombination. The helicase moves 5' -&gt; 3' on the lagging strand template, unwinding the DNA duplex ahead of the leading strand polymerase at the replication fork and generating ssDNA for both leading and lagging strand synthesis. Interaction with the primase allows the primase to initiate lagging strand synthesis and fully activates the helicase. Loaded by the helicase assembly factor on replication forks that begin at discrete replication origin sequences, as well as on forks that are created during recombination. The protein is DnaB-like replicative helicase of Escherichia coli (Bacteriophage T4).